A 382-amino-acid polypeptide reads, in one-letter code: MQDAAPRLTFTLRDEERLMMKIGVFVPIGNNGWLISTHAPQYMPTFELNKAIVQKAEHYHFDFALSMIKLRGFGGKTEFWDHNLESFTLMAGLAAVTSRIQIYATAATLTLPPAIVARMAATIDSISGGRFGVNLVTGWQKPEYEQMGIWPGDDYFSRRYDYLTEYVQVLRDLWGTGKSDFKGDFFTMNDCRVSPQPSVPMKVICAGQSDAGMAFSAQYADFNFCFGKGVNTPTAFAPTAARMKQAAEQTGRDVGSYVLFMVIADETDDAARAKWEHYKAGADEEALSWLTEQSQKDTRSGTDTNVRQMADPTSAVNINMGTLVGSYASVARMLDEVASVPGAEGVLLTFDDFLSGIETFGERIQPLMQCRAHLPVLTQEVA.

FMN-binding positions include 68–69 (IK), N134, E143, 159–160 (RY), and S209.

Belongs to the NtaA/SnaA/DszA monooxygenase family. RutA subfamily.

It catalyses the reaction uracil + FMNH2 + NADH + O2 = (Z)-3-ureidoacrylate + FMN + NAD(+) + H2O + H(+). The enzyme catalyses thymine + FMNH2 + NADH + O2 = (Z)-2-methylureidoacrylate + FMN + NAD(+) + H2O + H(+). In terms of biological role, catalyzes the pyrimidine ring opening between N-3 and C-4 by an unusual flavin hydroperoxide-catalyzed mechanism, adding oxygen atoms in the process to yield ureidoacrylate peracid, that immediately reacts with FMN forming ureidoacrylate and FMN-N(5)-oxide. The FMN-N(5)-oxide reacts spontaneously with NADH to produce FMN. Requires the flavin reductase RutF to regenerate FMN in vivo. The polypeptide is Pyrimidine monooxygenase RutA (Escherichia coli O55:H7 (strain CB9615 / EPEC)).